The sequence spans 336 residues: Acetyl-coenzyme A carboxylase carboxyl transferase subunit beta (336 aa).

Residues 27–297 form the CoA carboxyltransferase N-terminal domain; that stretch reads LWTKCESCQG…VAPAPAPAAT (271 aa). Residues Cys31, Cys34, Cys50, and Cys53 each contribute to the Zn(2+) site. The segment at 31 to 53 adopts a C4-type zinc-finger fold; that stretch reads CESCQGILYRPDLERNLEVCPKC. The disordered stretch occupies residues 287 to 336; it reads SVAPAPAPAATVDPEPESAEPEAPAEEAGPAGAAGDQAGESQDEGDPRNA. Over residues 300–311 the composition is skewed to acidic residues; the sequence is PEPESAEPEAPA. The span at 312–326 shows a compositional bias: low complexity; sequence EEAGPAGAAGDQAGE.

The protein belongs to the AccD/PCCB family. In terms of assembly, acetyl-CoA carboxylase is a heterohexamer composed of biotin carboxyl carrier protein (AccB), biotin carboxylase (AccC) and two subunits each of ACCase subunit alpha (AccA) and ACCase subunit beta (AccD). The cofactor is Zn(2+).

Its subcellular location is the cytoplasm. The catalysed reaction is N(6)-carboxybiotinyl-L-lysyl-[protein] + acetyl-CoA = N(6)-biotinyl-L-lysyl-[protein] + malonyl-CoA. The protein operates within lipid metabolism; malonyl-CoA biosynthesis; malonyl-CoA from acetyl-CoA: step 1/1. Its function is as follows. Component of the acetyl coenzyme A carboxylase (ACC) complex. Biotin carboxylase (BC) catalyzes the carboxylation of biotin on its carrier protein (BCCP) and then the CO(2) group is transferred by the transcarboxylase to acetyl-CoA to form malonyl-CoA. This Halorhodospira halophila (strain DSM 244 / SL1) (Ectothiorhodospira halophila (strain DSM 244 / SL1)) protein is Acetyl-coenzyme A carboxylase carboxyl transferase subunit beta.